A 96-amino-acid chain; its full sequence is Cystatin (96 aa).

One can recognise a Cystatin domain in the interval 22 to 65; the sequence is DFIKAALNETGTHAGRKYKVLRSSQQVVAGMKYTFYIVFEDDES. The N-linked (GlcNAc...) asparagine glycan is linked to N29.

This sequence belongs to the cystatin family. In terms of assembly, interacts with cathepsin L-like peptidase; the interaction results in inhibition of cathepsin L-like peptidase activity. Salivary gland. Midgut.

Cysteine proteinase inhibitor. Inhibits cathepsin L-like peptidase. Increases cell viability following apoptosis induction by staurosporine. Inhibits human cathepsin S (CTSS), human cathepsin L2 (CTSV), human cathepsin L (CTSL), human cathepsin B (CTSB) and papain. In terms of biological role, (Microbial infection) Modulates dengue virus type 2 replication in salivary glands. The polypeptide is Cystatin (Aedes aegypti (Yellowfever mosquito)).